The primary structure comprises 179 residues: Acireductone dioxygenase (179 aa).

Fe(2+) is bound by residues His88, His90, Glu94, and His133. The Ni(2+) site is built by His88, His90, Glu94, and His133.

The protein belongs to the acireductone dioxygenase (ARD) family. Monomer. Interacts with MMP14. Fe(2+) serves as cofactor. Ni(2+) is required as a cofactor.

Its subcellular location is the cytoplasm. It localises to the nucleus. The protein resides in the cell membrane. The enzyme catalyses 1,2-dihydroxy-5-(methylsulfanyl)pent-1-en-3-one + O2 = 4-methylsulfanyl-2-oxobutanoate + formate + 2 H(+). It catalyses the reaction 1,2-dihydroxy-5-(methylsulfanyl)pent-1-en-3-one + O2 = 3-(methylsulfanyl)propanoate + CO + formate + 2 H(+). It participates in amino-acid biosynthesis; L-methionine biosynthesis via salvage pathway; L-methionine from S-methyl-5-thio-alpha-D-ribose 1-phosphate: step 5/6. Catalyzes 2 different reactions between oxygen and the acireductone 1,2-dihydroxy-3-keto-5-methylthiopentene (DHK-MTPene) depending upon the metal bound in the active site. Fe-containing acireductone dioxygenase (Fe-ARD) produces formate and 2-keto-4-methylthiobutyrate (KMTB), the alpha-ketoacid precursor of methionine in the methionine recycle pathway. Ni-containing acireductone dioxygenase (Ni-ARD) produces methylthiopropionate, carbon monoxide and formate, and does not lie on the methionine recycle pathway. The protein is Acireductone dioxygenase (adi1) of Xenopus laevis (African clawed frog).